A 251-amino-acid chain; its full sequence is MSLLLENLIEEDTIFFAGSISEYDDLQMVIAGAKSKFPRSMLSIFNIVPRTMSKYELELIHNENITGAMFTTMYNIRNNLGLGDDKLTIEAIENYFLDPNNEVMPLIINNTDMTTVIPKKSGRRKNKNMVIFRQGSSPILCIFETRKKINIYKENMESVSTEYTPIGDNKALISKYAGINILNVYSPSTSMRLNAIYGFTNKNKLEKLSTNKELESYSSSPLQEPIRLNDFLGLLECVKKNIPLTDIPTKD.

A propeptide spans 1-32 (MSLLLENLIEEDTIFFAGSISEYDDLQMVIAG) (removed by core protease OPG083).

This sequence belongs to the orthopoxvirus OPG098 family. Post-translationally, undergoes morphogenesis-associated proteolysis which cleaves the 28 kDa to a 25-kDa product. Proteolytic cleavage of major core proteins P4a (OPG136), P4b (OPG129), and VP8 (OPG098), which occurs at a late stage of core formation, is required for production of infectious mature virions (MV).

It localises to the virion. It is found in the host cytoplasm. Functionally, major core structural protein. The protein is Core protein VP8 (OPG098) of Monkeypox virus.